The chain runs to 327 residues: Acetaldehyde dehydrogenase 5 (327 aa).

15–18 (SGNI) lines the NAD(+) pocket. Cys-133 (acyl-thioester intermediate) is an active-site residue. Residues 164–172 (SAGPGTRAN) and Asn-297 each bind NAD(+).

The protein belongs to the acetaldehyde dehydrogenase family.

The catalysed reaction is acetaldehyde + NAD(+) + CoA = acetyl-CoA + NADH + H(+). This Rhodococcus jostii (strain RHA1) protein is Acetaldehyde dehydrogenase 5.